The chain runs to 2729 residues: 3-methylorcinaldehyde synthase (2729 aa).

The segment at 99 to 238 (LPAALLIPLA…GTISNLTRQL (140 aa)) is N-terminal acylcarrier protein transacylase domain (SAT). Positions 361-373 (SLASTVDINSGNG) are enriched in polar residues. The disordered stretch occupies residues 361–391 (SLASTVDINSGNGKTRRVKPADAQSSANSTH). Residues 397–828 (DTDIAIVGMS…GSNASAVLVQ (432 aa)) enclose the Ketosynthase family 3 (KS3) domain. Catalysis depends on for beta-ketoacyl synthase activity residues C571, H706, and H748. The malonyl-CoA:ACP transacylase (MAT) domain stretch occupies residues 942-1230 (FGGQVSCFVG…FLEAGTNSSV (289 aa)). S1029 (for acyl/malonyl transferase activity) is an active-site residue. The interval 1345–1479 (ETILTFHSSD…GTVAFKNPGD (135 aa)) is N-terminal hotdog fold. The PKS/mFAS DH domain maps to 1345–1669 (ETILTFHSSD…YVKIARPSME (325 aa)). The interval 1374-1665 (KQLLRGHMTL…LGIAYVKIAR (292 aa)) is product template (PT) domain. H1380 serves as the catalytic Proton acceptor; for dehydratase activity. The C-terminal hotdog fold stretch occupies residues 1513-1669 (DEMLGNQSIY…YVKIARPSME (157 aa)). D1575 acts as the Proton donor; for dehydratase activity in catalysis. A compositionally biased stretch (low complexity) spans 1682–1701 (AGGKTTPQTATKPAAAPVVA). The tract at residues 1682–1726 (AGGKTTPQTATKPAAAPVVADHTPRTTESASTVNGVNLDDRKPEG) is disordered. Residues 1707-1716 (TTESASTVNG) show a composition bias toward polar residues. The 75-residue stretch at 1750 to 1824 (QDMIARVKAV…GLLQCVAGAL (75 aa)) folds into the Carrier domain. S1784 carries the post-translational modification O-(pantetheine 4'-phosphoryl)serine. Residues 1835–1868 (TLTASSDSGINSAKSSILSGTSTSTSTGTTDTGS) are compositionally biased toward low complexity. The disordered stretch occupies residues 1835-1874 (TLTASSDSGINSAKSSILSGTSTSTSTGTTDTGSDVGQSM). The interval 2086-2254 (EINPLRIMET…GYVDWTEGMT (169 aa)) is methyltransferase (C-MeT) domain. Positions 2344-2599 (ITGGTGGLGA…GWTPADYVAR (256 aa)) are reductase (R) domain.

It functions in the pathway secondary metabolite biosynthesis; terpenoid biosynthesis. Non-reducing polyketide synthase; part of the gene cluster that mediates the biosynthesis of xenovulene A, an unusual meroterpenoid that has potent inhibitory effects on the human gamma-aminobutyrate A (GABAA) benzodiazepine receptor. The first step of xenovulene A biosynthesis is the biosynthesis of 3-methylorcinaldehyde performed by the non-reducing polyketide synthase aspks1. The salicylate hydroxylase asL1 then catalyzes the oxidative dearomatization of 3-methylorcinaldehyde to yield a dearomatized hydroxycyclohexadione. The 2-oxoglutarate-dependent dioxygenase asL3 further catalyzes the oxidative ring expansion to provide the first tropolone metabolite. The cytochrome P450 monooxygenase asR2 allows the synthesis of tropolone hemiacetal. In parallel, a previously unrecognised class of terpene cyclase, asR6, produces alpha-humulene from farnesylpyrophosphate (FPP). The putative Diels-Alderase asR5 probably catalyzes the formation of the tropolone-humulene skeleton by linking humulene and the polyketide moiety. Oxidative-ring contractions catalyzed by asL4 and asL6 then processively remove carbon atoms from the polyketide to yield xenovulene A. This Sarocladium schorii (Acremonium strictum (strain IMI 501407)) protein is 3-methylorcinaldehyde synthase.